Reading from the N-terminus, the 453-residue chain is Probable L-galactonate transporter (453 aa).

Positions 1 to 23 (MEKENITIDPRSSFTPSSSADIP) are disordered. Topologically, residues 1-42 (MEKENITIDPRSSFTPSSSADIPVPPDGLVQRSTRIKRIQTT) are periplasmic. Polar residues predominate over residues 10 to 20 (PRSSFTPSSSA). A helical transmembrane segment spans residues 43-63 (AMLLLFFAAVINYLDRSSLSV). The Cytoplasmic portion of the chain corresponds to 64–71 (ANLTIREE). The chain crosses the membrane as a helical span at residues 72-92 (LGLSATEIGALLSVFSLAYGI). Residues 93 to 107 (AQLPCGPLLDRKGPR) are Periplasmic-facing. A helical transmembrane segment spans residues 108–128 (LMLGLGMFFWSLFQAMSGMVH). The Cytoplasmic portion of the chain corresponds to 129 to 174 (NFTQFVLVRIGMGIGEAPMNPCGVKVINDWFNIKERGRPMGFFNAA). Residues 175–195 (STIGVAVSPPILAAMMLVMGW) traverse the membrane as a helical segment. Position 196 (arginine 196) is a topological domain, periplasmic. Residues 197 to 217 (GMFITIGVLGIFLAIGWYMLY) form a helical membrane-spanning segment. At 218-259 (RNREHVELTAVEQAYLNAGSVNARRDPLSFAEWRSLFRNRTM) the chain is on the cytoplasmic side. A helical transmembrane segment spans residues 260 to 280 (WGMMLGFSGINYTAWLYLAWL). Topologically, residues 281–295 (PGYLQTAYNLDLKST) are periplasmic. A helical transmembrane segment spans residues 296-316 (GLMAAIPFLFGAAGMLVNGYV). Residues 317–332 (TDWLVKGGMAPIKSRK) are Cytoplasmic-facing. The chain crosses the membrane as a helical span at residues 333-353 (ICIIAGMFCSAAFTLIVPQAT). The Periplasmic portion of the chain corresponds to 354-359 (TSMTAV). A helical transmembrane segment spans residues 360 to 380 (LLIGMALFCIHFAGTSCWGLI). Residues 381–394 (HVAVASRMTASVGS) lie on the Cytoplasmic side of the membrane. Residues 395-415 (IQNFASFICASFAPIITGFIV) traverse the membrane as a helical segment. The Periplasmic portion of the chain corresponds to 416–422 (DTTHSFR). A helical membrane pass occupies residues 423–443 (LALIICGCVTAAGALAYIFLV). The Cytoplasmic segment spans residues 444–453 (RQPINDPRKD).

The protein belongs to the major facilitator superfamily. Phthalate permease family.

It is found in the cell inner membrane. The catalysed reaction is L-galactonate(in) + H(+)(in) = L-galactonate(out) + H(+)(out). Functionally, probably responsible for the transport of L-galactonate from the periplasm across the inner membrane. Is essential for growth on L-galactonate as the sole carbon source. The polypeptide is Probable L-galactonate transporter (lgoT) (Escherichia coli (strain K12)).